Consider the following 219-residue polypeptide: EP300-interacting inhibitor of differentiation 2 (219 aa).

The segment at 1–71 (MSELPADQGV…PVPEAREGPM (71 aa)) is disordered. Over residues 20–34 (GDVRQAEVGGRRREP) the composition is skewed to basic and acidic residues. R75 is subject to Omega-N-methylarginine. Positions 95-115 (AEPAEEEGPEGRPRSRPGNGP) are disordered.

In terms of assembly, heterodimer with EID2B. Interacts with the C-terminus of EP300. Interacts with HDAC1 and HDAC2. Interacts with SMAD2, SMAD4 and with the MH2 domain of SMAD3.

Its subcellular location is the nucleus. Its function is as follows. Interacts with EP300 and acts as a repressor of MYOD-dependent transcription and muscle differentiation. Inhibits EP300 histone acetyltransferase activity. Acts as a repressor of TGFB/SMAD transcriptional responses. May act as a repressor of the TGFB/SMAD3-dependent signaling by selectively blocking formation of TGFB-induced SMAD3-SMAD4 complex. In Bos taurus (Bovine), this protein is EP300-interacting inhibitor of differentiation 2.